Reading from the N-terminus, the 501-residue chain is ADP,ATP carrier protein 3 (501 aa).

A run of 12 helical transmembrane segments spans residues 23-43 (LKLFIPMALMMLCILFNFGAL), 59-79 (IISFLKLWLVLPSCVIFTVLY), 90-110 (YIFYSIVGTFLLFFLLFAYII), 146-166 (YALMYIFSELWSAVVINLMFW), 183-203 (PVLGMIGNIGLIIAGSVLVFF), 227-247 (IILQPIISIIVTAGIIAMFLF), 293-313 (IALLIICYGLLINIVEGPWKA), 326-346 (VNFMGMFNIWMGISCVTFMII), 361-381 (LLTPIMLSITGFIFFIFIIFI), 383-403 (EIGTCFGDFNLLYVAIIVGAI), 446-466 (FGKSLGAFIQSLIFIIIPTAT), and 470-490 (IIIYLLVIFIVMMNLWIWNII).

It belongs to the ADP/ATP translocase tlc family.

The protein localises to the cell membrane. Functionally, provides the rickettsial cell with host ATP in exchange for rickettsial ADP. This is an obligate exchange system. This energy acquiring activity is an important component of rickettsial parasitism. This Rickettsia typhi (strain ATCC VR-144 / Wilmington) protein is ADP,ATP carrier protein 3 (tlcC).